The following is a 480-amino-acid chain: UDP-N-acetylmuramate--L-alanine ligase (480 aa).

Position 129–135 (129–135 (GTHGKTT)) interacts with ATP.

The protein belongs to the MurCDEF family.

Its subcellular location is the cytoplasm. It carries out the reaction UDP-N-acetyl-alpha-D-muramate + L-alanine + ATP = UDP-N-acetyl-alpha-D-muramoyl-L-alanine + ADP + phosphate + H(+). It participates in cell wall biogenesis; peptidoglycan biosynthesis. Functionally, cell wall formation. The protein is UDP-N-acetylmuramate--L-alanine ligase of Mannheimia succiniciproducens (strain KCTC 0769BP / MBEL55E).